Reading from the N-terminus, the 1038-residue chain is Kinesin-like protein KIF17 (1038 aa).

The Kinesin motor domain occupies Ser5–Ile335. Gly91–Ser98 is a binding site for ATP. A coiled-coil region spans residues Lys346 to Val470. Disordered stretches follow at residues Thr379–Asp401, Leu503–Glu559, and Asp636–Pro657. Composition is skewed to polar residues over residues Ser533–Ser551 and Asp636–Ser651. A coiled-coil region spans residues Gln748 to Thr855. Disordered regions lie at residues Val916–Gln940 and Met976–Leu1038. The span at Asn983 to Pro1000 shows a compositional bias: low complexity.

The protein belongs to the TRAFAC class myosin-kinesin ATPase superfamily. Kinesin family. In terms of assembly, homodimer. Interacts with APBA1 (via PDZ domain); the interaction is direct and is required for association of KIF17 with the cargo that is to be transported. Interacts with IFT B complex components IFT52 and IFT57. Interacts with IFT70B. Interacts with PIWIL1. Interacts with TBATA. In terms of tissue distribution, highly expressed in the gray matter of the brain, especially in the hippocampus.

It localises to the cytoplasm. Its subcellular location is the cytoskeleton. The protein localises to the cell projection. The protein resides in the cilium. It is found in the dendrite. Functionally, dendrite-specific motor protein which, in association with the Apba1-containing complex (LIN-10-LIN-2-LIN-7 complex), transports vesicles containing N-methyl-D-aspartate (NMDA) receptor subunit NR2B along microtubules. The protein is Kinesin-like protein KIF17 (Kif17) of Mus musculus (Mouse).